The following is a 147-amino-acid chain: MRTPNYINNNYFNNNNNNNNNNNNNNNNNNNNNNNNNNNNNNNQTNLNEENNDQYDMMRENLKIRNITVILKLLITMKAGITRNSSDTTGMTMTPSDQVPTPGVSKDDFNTLIIRHFRLYNNYPSPSPTTSFNSTNPQNTHQTRKSN.

Disordered stretches follow at residues 1–49 (MRTP…NLNE) and 125–147 (SPSP…RKSN). Low complexity-rich tracts occupy residues 8–49 (NNNY…NLNE) and 125–140 (SPSP…PQNT).

This is an uncharacterized protein from Dictyostelium discoideum (Social amoeba).